A 343-amino-acid chain; its full sequence is Phosphate acyltransferase (343 aa).

It belongs to the PlsX family. As to quaternary structure, homodimer. Probably interacts with PlsY.

Its subcellular location is the cytoplasm. It catalyses the reaction a fatty acyl-[ACP] + phosphate = an acyl phosphate + holo-[ACP]. It functions in the pathway lipid metabolism; phospholipid metabolism. Catalyzes the reversible formation of acyl-phosphate (acyl-PO(4)) from acyl-[acyl-carrier-protein] (acyl-ACP). This enzyme utilizes acyl-ACP as fatty acyl donor, but not acyl-CoA. The polypeptide is Phosphate acyltransferase (Haemophilus ducreyi (strain 35000HP / ATCC 700724)).